The sequence spans 137 residues: Small ribosomal subunit protein uS11 (137 aa).

The interval M1–H30 is disordered. The segment covering G8 to K21 has biased composition (basic residues).

Belongs to the universal ribosomal protein uS11 family. As to quaternary structure, part of the 30S ribosomal subunit. Interacts with proteins S7 and S18. Binds to IF-3.

Located on the platform of the 30S subunit, it bridges several disparate RNA helices of the 16S rRNA. Forms part of the Shine-Dalgarno cleft in the 70S ribosome. The polypeptide is Small ribosomal subunit protein uS11 (Mycolicibacterium vanbaalenii (strain DSM 7251 / JCM 13017 / BCRC 16820 / KCTC 9966 / NRRL B-24157 / PYR-1) (Mycobacterium vanbaalenii)).